Reading from the N-terminus, the 522-residue chain is ATP synthase subunit alpha 2 (522 aa).

Position 176 to 183 (176 to 183) interacts with ATP; it reads GDRQTGKT.

Belongs to the ATPase alpha/beta chains family. In terms of assembly, F-type ATPases have 2 components, CF(1) - the catalytic core - and CF(0) - the membrane proton channel. CF(1) has five subunits: alpha(3), beta(3), gamma(1), delta(1), epsilon(1). CF(0) has three main subunits: a(1), b(2) and c(9-12). The alpha and beta chains form an alternating ring which encloses part of the gamma chain. CF(1) is attached to CF(0) by a central stalk formed by the gamma and epsilon chains, while a peripheral stalk is formed by the delta and b chains.

It localises to the cell inner membrane. The enzyme catalyses ATP + H2O + 4 H(+)(in) = ADP + phosphate + 5 H(+)(out). Functionally, produces ATP from ADP in the presence of a proton gradient across the membrane. The alpha chain is a regulatory subunit. The sequence is that of ATP synthase subunit alpha 2 from Syntrophotalea carbinolica (strain DSM 2380 / NBRC 103641 / GraBd1) (Pelobacter carbinolicus).